We begin with the raw amino-acid sequence, 374 residues long: Alcohol dehydrogenase class-3 (374 aa).

N-acetylalanine is present on Ala-2. Residues Cys-45, His-67, Cys-97, Cys-100, Cys-103, Cys-111, and Cys-174 each contribute to the Zn(2+) site. Residue Lys-233 is modified to N6-succinyllysine. Ser-247 is subject to Phosphoserine. An N6-succinyllysine modification is found at Lys-315. Ser-324 is subject to Phosphoserine.

Belongs to the zinc-containing alcohol dehydrogenase family. Class-III subfamily. As to quaternary structure, homodimer. The cofactor is Zn(2+).

It localises to the cytoplasm. The catalysed reaction is a primary alcohol + NAD(+) = an aldehyde + NADH + H(+). It carries out the reaction a secondary alcohol + NAD(+) = a ketone + NADH + H(+). It catalyses the reaction S-(hydroxymethyl)glutathione + NADP(+) = S-formylglutathione + NADPH + H(+). The enzyme catalyses S-(hydroxymethyl)glutathione + NAD(+) = S-formylglutathione + NADH + H(+). The catalysed reaction is 20-oxo-(5Z,8Z,11Z,14Z)-eicosatetraenoate + NAD(+) + H2O = (5Z,8Z,11Z,14Z)-eicosatetraenedioate + NADH + 2 H(+). It carries out the reaction 20-hydroxy-(5Z,8Z,11Z,14Z)-eicosatetraenoate + NAD(+) = 20-oxo-(5Z,8Z,11Z,14Z)-eicosatetraenoate + NADH + H(+). It catalyses the reaction S-nitrosoglutathione + NADH + H(+) = S-(hydroxysulfenamide)glutathione + NAD(+). Its function is as follows. Catalyzes the oxidation of long-chain primary alcohols and the oxidation of S-(hydroxymethyl) glutathione. Also oxidizes long chain omega-hydroxy fatty acids, such as 20-HETE, producing both the intermediate aldehyde, 20-oxoarachidonate and the end product, a dicarboxylic acid, (5Z,8Z,11Z,14Z)-eicosatetraenedioate. Class-III ADH is remarkably ineffective in oxidizing ethanol. Required for clearance of cellular formaldehyde, a cytotoxic and carcinogenic metabolite that induces DNA damage. Also acts as a S-nitroso-glutathione reductase by catalyzing the NADH-dependent reduction of S-nitrosoglutathione, thereby regulating protein S-nitrosylation. This is Alcohol dehydrogenase class-3 from Bos taurus (Bovine).